Reading from the N-terminus, the 641-residue chain is Transcription termination factor MTERF2, chloroplastic (641 aa).

2 disordered regions span residues 54–80 and 606–641; these read LKLN…DLDG and FEAG…DLTE. The span at 610–641 shows a compositional bias: acidic residues; the sequence is LDSEDSQPSDENISDQEIAFSDEAEEEEDLTE.

This sequence belongs to the mTERF family.

The protein localises to the plastid. It is found in the chloroplast. In terms of biological role, transcription termination factor involved in processing of plastid transcripts. Essential for embryogenesis. This chain is Transcription termination factor MTERF2, chloroplastic, found in Arabidopsis thaliana (Mouse-ear cress).